A 290-amino-acid polypeptide reads, in one-letter code: 6-carboxyhexanoate--CoA ligase (290 aa).

Belongs to the BioW family. Homodimer. It depends on Mg(2+) as a cofactor.

The catalysed reaction is heptanedioate + ATP + CoA = 6-carboxyhexanoyl-CoA + AMP + diphosphate. The protein operates within metabolic intermediate metabolism; pimeloyl-CoA biosynthesis; pimeloyl-CoA from pimelate: step 1/1. In terms of biological role, catalyzes the transformation of pimelate into pimeloyl-CoA with concomitant hydrolysis of ATP to AMP. This chain is 6-carboxyhexanoate--CoA ligase, found in Bacillus amyloliquefaciens (Bacillus velezensis).